The following is a 490-amino-acid chain: Glutamyl-tRNA(Gln) amidotransferase subunit A (490 aa).

Active-site charge relay system residues include Lys78 and Ser158. Catalysis depends on Ser182, which acts as the Acyl-ester intermediate.

The protein belongs to the amidase family. GatA subfamily. Heterotrimer of A, B and C subunits.

It carries out the reaction L-glutamyl-tRNA(Gln) + L-glutamine + ATP + H2O = L-glutaminyl-tRNA(Gln) + L-glutamate + ADP + phosphate + H(+). Its function is as follows. Allows the formation of correctly charged Gln-tRNA(Gln) through the transamidation of misacylated Glu-tRNA(Gln) in organisms which lack glutaminyl-tRNA synthetase. The reaction takes place in the presence of glutamine and ATP through an activated gamma-phospho-Glu-tRNA(Gln). This Caulobacter sp. (strain K31) protein is Glutamyl-tRNA(Gln) amidotransferase subunit A.